The following is a 572-amino-acid chain: Protein IQ-DOMAIN 30 (572 aa).

The segment at 75 to 96 is disordered; sequence SDDEIQVSEVQPTDSQDVASVP. Residues 82-92 show a composition bias toward polar residues; the sequence is SEVQPTDSQDV. 2 IQ domains span residues 108–136 and 137–154; these read QEIA…GIIR and LQAL…VSTL. The calmodulin-binding stretch occupies residues 159-178; the sequence is GIVRLQALARGREIRHSDIG. 2 disordered regions span residues 282 to 332 and 399 to 572; these read RPKK…MDNP and IQTH…EWKR. Polar residues-rich tracts occupy residues 291–305 and 400–419; these read PSSN…QTSS and QTHT…VNQI. Over residues 428-455 the composition is skewed to basic and acidic residues; the sequence is AEEKEDVKEERTPKQNHKENSAGKENQK. 3 stretches are compositionally biased toward polar residues: residues 459 to 493, 502 to 514, and 522 to 560; these read KASS…QATK, QGSS…GTTE, and LPSS…SSRE.

This sequence belongs to the IQD family. As to quaternary structure, binds to multiple calmodulin (CaM) in the presence of Ca(2+) and CaM-like proteins.

The protein resides in the nucleus envelope. Its subcellular location is the cytoplasm. It localises to the cytoskeleton. May be involved in cooperative interactions with calmodulins or calmodulin-like proteins. Recruits calmodulin proteins to microtubules, thus being a potential scaffold in cellular signaling and trafficking. May associate with nucleic acids and regulate gene expression at the transcriptional or post-transcriptional level. This chain is Protein IQ-DOMAIN 30, found in Arabidopsis thaliana (Mouse-ear cress).